The chain runs to 393 residues: Transcription factor bHLH112 (393 aa).

2 disordered regions span residues 248–277 (TRAQ…SPLP) and 332–356 (KQGA…NENH). A compositionally biased stretch (basic and acidic residues) spans 254–265 (SLKRAKDNESAA). Residues 270–319 (VTTPSPLPTFKVRKENLRDQITSLQQLVSPFGKTDTASVLQEAIEYIKFL) form the bHLH domain. Residues 332–347 (KQGASNQQQQQISGKS) are compositionally biased toward low complexity.

Homodimer.

Its subcellular location is the nucleus. The sequence is that of Transcription factor bHLH112 (BHLH112) from Arabidopsis thaliana (Mouse-ear cress).